Consider the following 455-residue polypeptide: Kynurenine 3-monooxygenase (455 aa).

It belongs to the aromatic-ring hydroxylase family. KMO subfamily. It depends on FAD as a cofactor.

It catalyses the reaction L-kynurenine + NADPH + O2 + H(+) = 3-hydroxy-L-kynurenine + NADP(+) + H2O. It functions in the pathway cofactor biosynthesis; NAD(+) biosynthesis; quinolinate from L-kynurenine: step 1/3. Functionally, catalyzes the hydroxylation of L-kynurenine (L-Kyn) to form 3-hydroxy-L-kynurenine (L-3OHKyn). Required for synthesis of quinolinic acid. The protein is Kynurenine 3-monooxygenase of Stenotrophomonas maltophilia (strain K279a).